Consider the following 569-residue polypeptide: Myotubularin-related protein 9 (569 aa).

The region spanning 134 to 513 (GWSAFDLEQE…QCIKIWDRLF (380 aa)) is the Myotubularin phosphatase domain.

It belongs to the protein-tyrosine phosphatase family. Non-receptor class myotubularin subfamily. As to quaternary structure, heterodimer with lipid phosphatase mtm-6.

It is found in the cytoplasm. The protein localises to the membrane. Functionally, may act as a regulatory subunit for mtm-6. In association with phosphatase mtm-6, plays a role in endosome trafficking probably by regulating phosphatidylinositol-3-phosphate levels. Regulates fluid phase endocytosis in coelomocytes. Regulates posterior migration of QL neuroblast descendants and the anterior migration of QR neuroblast descendants and HSN neurons during larval development probably by controlling Wnt ligand secretion through the regulation of sorting receptor mig-14 trafficking. Involved in the formation of correct synapse number in DA9 motor neurons. This Caenorhabditis elegans protein is Myotubularin-related protein 9.